Reading from the N-terminus, the 534-residue chain is Steroid hormone receptor family member cnr14 (534 aa).

Disordered stretches follow at residues 30–53 and 119–139; these read SGKT…QWSH and PATS…GHTT. Residues 119–130 are compositionally biased toward low complexity; it reads PATSVTSSLSPP. Positions 148–223 form a DNA-binding region, nuclear receptor; that stretch reads ISFCKVCGDK…SGMSKDSVRQ (76 aa). NR C4-type zinc fingers lie at residues 151–171 and 187–211; these read CKVC…CEGC and CLKQ…FKKC. Residues 252 to 493 form the NR LBD domain; that stretch reads EVDAVYEAVL…PPLVVEMFQL (242 aa). Positions 502–534 are disordered; sequence HNNQENQYTPAPEHQSPQPQQPTPNQQQTPVHC. Residues 511–534 are compositionally biased toward low complexity; that stretch reads PAPEHQSPQPQQPTPNQQQTPVHC.

It belongs to the nuclear hormone receptor family. NR1 subfamily. In terms of tissue distribution, most abundant in embryos.

The protein resides in the nucleus. Its function is as follows. Transcriptional regulator which is involved in the sex determination and X chromosome dosage compensation pathways. Directly binds to five 5'-A(G/C)(G/T)(T/G)C(A/G)-3' sites in the promoter of sex-determining factor xol-1 to negatively regulate its expression and promote hermaphrodite development. Together with fox-1 is involved in making the distinction between one and two X-chromosomes. Plays a role in the fox-1-mediated repression of the functionally active isoform (isoform b) of the sex-determining factor xol-1 gene to promote hermaphrodite development. Plays a role in the association of the dosage compensation complex proteins dpy-27 and sdc-3 with the hermaphrodite X chromosomes. The protein is Steroid hormone receptor family member cnr14 of Caenorhabditis elegans.